A 316-amino-acid chain; its full sequence is Coproporphyrin III ferrochelatase (316 aa).

Fe-coproporphyrin III is bound by residues Tyr13, Arg30, Arg46–Tyr47, Ser54, and Tyr125. 2 residues coordinate Fe(2+): His183 and Glu264.

Belongs to the ferrochelatase family.

The protein localises to the cytoplasm. It catalyses the reaction Fe-coproporphyrin III + 2 H(+) = coproporphyrin III + Fe(2+). The protein operates within porphyrin-containing compound metabolism; protoheme biosynthesis. In terms of biological role, involved in coproporphyrin-dependent heme b biosynthesis. Catalyzes the insertion of ferrous iron into coproporphyrin III to form Fe-coproporphyrin III. This is Coproporphyrin III ferrochelatase from Geobacillus kaustophilus (strain HTA426).